Reading from the N-terminus, the 250-residue chain is Beta-lactamase HcpA (250 aa).

Positions 1 to 25 (MLGSVKKTLFGVLCLGALCLRGLMA) are cleaved as a signal peptide. TPR repeat units follow at residues 29–62 (AKEL…KEGF), 67–98 (LGAF…NDGY), 100–133 (CRLL…LNHA), 134–169 (EGCT…LKDS), and 170–202 (PGCI…KDGR). Intrachain disulfides connect Cys-56–Cys-64, Cys-92–Cys-100, Cys-128–Cys-136, Cys-164–Cys-172, Cys-196–Cys-204, and Cys-232–Cys-240.

It belongs to the hcp beta-lactamase family.

It localises to the secreted. It catalyses the reaction a beta-lactam + H2O = a substituted beta-amino acid. With respect to regulation, inhibited by cloxacillin and oxacillin but not by ACA derivatives or metal chelators. Its function is as follows. Slowly hydrolyzes 6-aminopenicillinic acid and 7-aminocephalosporanic acid (ACA) derivatives. May be involved in the synthesis of the cell wall peptidoglycan. The sequence is that of Beta-lactamase HcpA (hcpA) from Helicobacter pylori (strain J99 / ATCC 700824) (Campylobacter pylori J99).